Here is a 247-residue protein sequence, read N- to C-terminus: Epidermal cell differentiation inhibitor (247 aa).

Residues 1–35 form the signal peptide; sequence MKNKLLFKIFLSLSLALSVYSINDKIIEVSNTSLA. The TR mART core domain maps to 39 to 247; the sequence is KNFTDLDEAT…IIITAIVFKK (209 aa). Residues arginine 120, serine 173, and glutamate 215 contribute to the active site.

To ADP-ribosyltransferase C3 of Clostridium.

In terms of biological role, inhibits terminal differentiation of cultured mouse keratinocytes. In culture, also inhibits the differentiation of human keratinocytes. Probable ADP-ribosyltransferase. The polypeptide is Epidermal cell differentiation inhibitor (Staphylococcus aureus).